We begin with the raw amino-acid sequence, 136 residues long: Inner membrane protein YbhQ (136 aa).

Residues 1–12 lie on the Cytoplasmic side of the membrane; sequence MKWQQRVRVATG. Residues 13 to 33 traverse the membrane as a helical segment; it reads LSCWQIMLHLLVVALLVVGWM. The Periplasmic portion of the chain corresponds to 34–37; the sequence is SKTL. The chain crosses the membrane as a helical span at residues 38 to 58; sequence VHVGVGLCALYCVTVVMMLVF. Over 59–71 the chain is Cytoplasmic; it reads QRHPEQRWREVAD. The chain crosses the membrane as a helical span at residues 72–92; the sequence is VLEELTTTWYFGAALIVLWLL. Topologically, residues 93–99 are periplasmic; sequence SRVLENN. Residues 100 to 120 form a helical membrane-spanning segment; sequence FLLAIAGLAILAGPAVVSLLA. Residues 121–136 are Cytoplasmic-facing; that stretch reads KDKKLHHLTSKHRVRR.

Its subcellular location is the cell inner membrane. In Escherichia coli O157:H7, this protein is Inner membrane protein YbhQ (ybhQ).